Consider the following 285-residue polypeptide: Cytosolic Fe-S cluster assembly factor CFD1 (285 aa).

30–37 (GKGGVGKS) serves as a coordination point for ATP. [4Fe-4S] cluster-binding residues include Cys-206 and Cys-209.

Belongs to the Mrp/NBP35 ATP-binding proteins family. NUBP2/CFD1 subfamily. In terms of assembly, heterotetramer of 2 NBP35 and 2 CFD1 chains. [4Fe-4S] cluster is required as a cofactor.

The protein localises to the cytoplasm. In terms of biological role, component of the cytosolic iron-sulfur (Fe/S) protein assembly (CIA) machinery. Required for maturation of extramitochondrial Fe-S proteins. The NBP35-CFD1 heterotetramer forms a Fe-S scaffold complex, mediating the de novo assembly of an Fe-S cluster and its transfer to target apoproteins. Required for biogenesis and export of both ribosomal subunits, which may reflect a role in assembly of the Fe/S clusters in RLI1, a protein which performs rRNA processing and ribosome export. The sequence is that of Cytosolic Fe-S cluster assembly factor CFD1 from Candida glabrata (strain ATCC 2001 / BCRC 20586 / JCM 3761 / NBRC 0622 / NRRL Y-65 / CBS 138) (Yeast).